The sequence spans 349 residues: Increased DNA methylation 2 (349 aa).

Residues 210 to 230 (EDNAGTCTSGEESDVAAKPEV) form a disordered region. Positions 233 to 349 (EAHGGLMVGL…VMKNLQKQTV (117 aa)) constitute a sHSP domain.

The protein belongs to the small heat shock protein (HSP20) family. Homodimer or oligomer. May form an 16-mer complex. Interacts with MBD7 (via C-terminus). Interacts with IDM1 (via N-terminus). Interacts with IMD3. Part of a complex made of MBD7, IDM1, IDM2, IDM3 and ROS1. As to expression, expressed in cotyledons and hypocotyls in young seedlings.

It localises to the nucleus. The protein resides in the nucleoplasm. Prevents DNA hypermethylation and transcriptional silencing of transgenes and of some endogenous genes. May act as a molecular chaperone of IDM1, regulating its H3K18 acetylation activity. In Arabidopsis thaliana (Mouse-ear cress), this protein is Increased DNA methylation 2.